A 393-amino-acid polypeptide reads, in one-letter code: uncharacterized protein (393 aa).

The disordered stretch occupies residues 345–393; the sequence is PNKWATDDAARREMERTRKARYRAKNRAVADPEDSPPGKRLRRGPKSST. Residues 349–361 are compositionally biased toward basic and acidic residues; it reads ATDDAARREMERT. Residues 383–393 show a composition bias toward basic residues; that stretch reads KRLRRGPKSST.

This is an uncharacterized protein from Ictalurid herpesvirus 1 (strain Auburn) (IcHV-1).